The following is a 236-amino-acid chain: 1-(5-phosphoribosyl)-5-[(5-phosphoribosylamino)methylideneamino] imidazole-4-carboxamide isomerase (236 aa).

D8 functions as the Proton acceptor in the catalytic mechanism. The Proton donor role is filled by D129.

The protein belongs to the HisA/HisF family.

Its subcellular location is the cytoplasm. It carries out the reaction 1-(5-phospho-beta-D-ribosyl)-5-[(5-phospho-beta-D-ribosylamino)methylideneamino]imidazole-4-carboxamide = 5-[(5-phospho-1-deoxy-D-ribulos-1-ylimino)methylamino]-1-(5-phospho-beta-D-ribosyl)imidazole-4-carboxamide. It functions in the pathway amino-acid biosynthesis; L-histidine biosynthesis; L-histidine from 5-phospho-alpha-D-ribose 1-diphosphate: step 4/9. This chain is 1-(5-phosphoribosyl)-5-[(5-phosphoribosylamino)methylideneamino] imidazole-4-carboxamide isomerase, found in Methanospirillum hungatei JF-1 (strain ATCC 27890 / DSM 864 / NBRC 100397 / JF-1).